Here is a 170-residue protein sequence, read N- to C-terminus: Inosine/xanthosine triphosphatase (170 aa).

This sequence belongs to the YjjX NTPase family. Homodimer. It depends on Mg(2+) as a cofactor. The cofactor is Mn(2+).

The enzyme catalyses XTP + H2O = XDP + phosphate + H(+). It carries out the reaction ITP + H2O = IDP + phosphate + H(+). Functionally, phosphatase that hydrolyzes non-canonical purine nucleotides such as XTP and ITP to their respective diphosphate derivatives. Probably excludes non-canonical purines from DNA/RNA precursor pool, thus preventing their incorporation into DNA/RNA and avoiding chromosomal lesions. In Aliivibrio fischeri (strain MJ11) (Vibrio fischeri), this protein is Inosine/xanthosine triphosphatase.